Reading from the N-terminus, the 483-residue chain is Cobyric acid synthase (483 aa).

Residues 251 to 438 enclose the GATase cobBQ-type domain; the sequence is ALIVAVPMLP…LHGVFSADRF (188 aa). The active-site Nucleophile is Cys333. The active site involves His430.

This sequence belongs to the CobB/CobQ family. CobQ subfamily.

Its pathway is cofactor biosynthesis; adenosylcobalamin biosynthesis. Catalyzes amidations at positions B, D, E, and G on adenosylcobyrinic A,C-diamide. NH(2) groups are provided by glutamine, and one molecule of ATP is hydrogenolyzed for each amidation. The sequence is that of Cobyric acid synthase from Brucella canis (strain ATCC 23365 / NCTC 10854 / RM-666).